The following is a 172-amino-acid chain: Shikimate kinase (172 aa).

14-19 (GAGKST) provides a ligand contact to ATP. Residue Ser18 coordinates Mg(2+). Substrate-binding residues include Asp36, Arg60, and Gly82. Arg120 serves as a coordination point for ATP. Arg140 is a substrate binding site.

It belongs to the shikimate kinase family. As to quaternary structure, monomer. Requires Mg(2+) as cofactor.

Its subcellular location is the cytoplasm. It carries out the reaction shikimate + ATP = 3-phosphoshikimate + ADP + H(+). The protein operates within metabolic intermediate biosynthesis; chorismate biosynthesis; chorismate from D-erythrose 4-phosphate and phosphoenolpyruvate: step 5/7. In terms of biological role, catalyzes the specific phosphorylation of the 3-hydroxyl group of shikimic acid using ATP as a cosubstrate. The protein is Shikimate kinase of Tolumonas auensis (strain DSM 9187 / NBRC 110442 / TA 4).